Here is a 584-residue protein sequence, read N- to C-terminus: Galectin-3-binding protein (584 aa).

The signal sequence occupies residues 1–18 (MTPPRLFWVWLLVAGTQG). In terms of domain architecture, SRCR spans 24–124 (MRLADGGATN…HERDAGVVCT (101 aa)). Intrachain disulfides connect Cys-49–Cys-113, Cys-62–Cys-123, and Cys-93–Cys-103. Asn-69 carries N-linked (GlcNAc...) asparagine glycosylation. 2 N-linked (GlcNAc...) asparagine glycosylation sites follow: Asn-125 and Asn-192. In terms of domain architecture, BTB spans 153–221 (CDLSISVNVQ…FYSRRIDITL (69 aa)). In terms of domain architecture, BACK spans 260 to 359 (PLDLYAYAVA…MLPEELFELQ (100 aa)). N-linked (GlcNAc...) asparagine glycosylation is found at Asn-361, Asn-397, Asn-550, and Asn-579.

Homodimers and homomultimers. The multimers form ring-like structures with a diameter of 30-40 nm. Binds LGALS1 and LGALS3. Binds ITGB1, COL4A1, COL5A1, COL6A1, FN1 and NID. Interacts with the gamma-tubulin ring complex (gamma-TuRC), composed of gamma-tubulin, TUBGCP2, TUBGCP3, TUBGCP4, TUBGCP5 and TUBGCP6. The unglycosylated form interacts with PDE4DIP; this interaction, which is PDE4DIP isoform-specific, may connect a pericentrosomal complex, made of AKAP9, CDK5RAP2, EB1/MAPRE1 and PDE4DIP, to the gamma-tubulin ring complex (gamma-TuRC) to promote microtubule assembly and acetylation.

It localises to the secreted. Its subcellular location is the extracellular space. The protein resides in the extracellular matrix. Its function is as follows. Promotes integrin-mediated cell adhesion. May stimulate host defense against viruses and tumor cells. This Pongo abelii (Sumatran orangutan) protein is Galectin-3-binding protein (LGALS3BP).